The sequence spans 238 residues: MSDVSYREITAKGLWSNNPALVQLLGLCPLLAVSSSVVNALGLGIATLLVLVISNSFVSLIRRQVSDAVRLPAFVMIIASAVTCTELLMKAFTYELYQILGLFIPLIVTNCAVLGRADAFASKNKLIPSAVDGFMMGLGFMLVLVAVGAVRELLGTGHLFGDMHLIFGEGARSWQLNIFGADYPNVIFALLPPGAFIVVGMLIAAKNSIDAHLKKRADARKTAVSTGSKRVRTTGAVS.

Helical transmembrane passes span 20-40, 41-61, 72-92, 95-115, 130-150, and 185-205; these read ALVQ…VVNA, LGLG…VSLI, PAFV…MKAF, ELYQ…AVLG, AVDG…VGAV, and NVIF…LIAA.

It belongs to the NqrDE/RnfAE family. As to quaternary structure, the complex is composed of six subunits: RnfA, RnfB, RnfC, RnfD, RnfE and RnfG.

The protein localises to the cell inner membrane. Part of a membrane-bound complex that couples electron transfer with translocation of ions across the membrane. This Cellvibrio japonicus (strain Ueda107) (Pseudomonas fluorescens subsp. cellulosa) protein is Ion-translocating oxidoreductase complex subunit E.